The primary structure comprises 246 residues: 1-(5-phosphoribosyl)-5-[(5-phosphoribosylamino)methylideneamino] imidazole-4-carboxamide isomerase (246 aa).

The active-site Proton acceptor is D8. Catalysis depends on D130, which acts as the Proton donor.

Belongs to the HisA/HisF family.

The protein resides in the cytoplasm. The enzyme catalyses 1-(5-phospho-beta-D-ribosyl)-5-[(5-phospho-beta-D-ribosylamino)methylideneamino]imidazole-4-carboxamide = 5-[(5-phospho-1-deoxy-D-ribulos-1-ylimino)methylamino]-1-(5-phospho-beta-D-ribosyl)imidazole-4-carboxamide. It functions in the pathway amino-acid biosynthesis; L-histidine biosynthesis; L-histidine from 5-phospho-alpha-D-ribose 1-diphosphate: step 4/9. The protein is 1-(5-phosphoribosyl)-5-[(5-phosphoribosylamino)methylideneamino] imidazole-4-carboxamide isomerase of Halorhodospira halophila (strain DSM 244 / SL1) (Ectothiorhodospira halophila (strain DSM 244 / SL1)).